The sequence spans 118 residues: Small ribosomal subunit protein uS11 (118 aa).

This sequence belongs to the universal ribosomal protein uS11 family. Part of the 30S ribosomal subunit. Interacts with proteins S7 and S18. Binds to IF-3.

Functionally, located on the platform of the 30S subunit, it bridges several disparate RNA helices of the 16S rRNA. Forms part of the Shine-Dalgarno cleft in the 70S ribosome. This is Small ribosomal subunit protein uS11 from Carsonella ruddii (strain PV).